The primary structure comprises 664 residues: Intraflagellar transport protein 70A2 (664 aa).

TPR repeat units follow at residues 11 to 44 (DGEF…SPRS), 45 to 78 (RAGL…HPEL), 153 to 186 (PDGL…SGYQ), 188 to 220 (DVSY…GIRQ), 395 to 423 (QVQE…EKYI), 424 to 456 (PVLM…CNDH), and 458 to 491 (VWKL…NYDN). A coiled-coil region spans residues 507 to 534 (YIMTSQNEEAEELMRKIEKEEEQLSYGD). Residues 543–576 (CIVNLVIGTLYCAKGNYDFGISRVIKSLEPYHKK) form a TPR 8 repeat.

The protein belongs to the TTC30/dfy-1/fleer family. As to quaternary structure, interacts wit the IFT B complex component IFT52.

The protein resides in the cell projection. Its subcellular location is the cilium. Functionally, required for polyglutamylation of axonemal tubulin. Plays a role in anterograde intraflagellar transport (IFT), the process by which cilia precursors are transported from the base of the cilium to the site of their incorporation at the tip. The chain is Intraflagellar transport protein 70A2 (Ift70a2) from Rattus norvegicus (Rat).